The following is a 374-amino-acid chain: 4-hydroxy-3-methylbut-2-en-1-yl diphosphate synthase (flavodoxin) (374 aa).

Positions 270, 273, 305, and 312 each coordinate [4Fe-4S] cluster.

The protein belongs to the IspG family. Requires [4Fe-4S] cluster as cofactor.

The catalysed reaction is (2E)-4-hydroxy-3-methylbut-2-enyl diphosphate + oxidized [flavodoxin] + H2O + 2 H(+) = 2-C-methyl-D-erythritol 2,4-cyclic diphosphate + reduced [flavodoxin]. The protein operates within isoprenoid biosynthesis; isopentenyl diphosphate biosynthesis via DXP pathway; isopentenyl diphosphate from 1-deoxy-D-xylulose 5-phosphate: step 5/6. Its function is as follows. Converts 2C-methyl-D-erythritol 2,4-cyclodiphosphate (ME-2,4cPP) into 1-hydroxy-2-methyl-2-(E)-butenyl 4-diphosphate. In Vibrio cholerae serotype O1 (strain ATCC 39315 / El Tor Inaba N16961), this protein is 4-hydroxy-3-methylbut-2-en-1-yl diphosphate synthase (flavodoxin).